The primary structure comprises 909 residues: Protein translocase subunit SecA (909 aa).

Residues glutamine 87, 105 to 109, and aspartate 514 each bind ATP; that span reads GEGKT. Positions 879–909 are disordered; sequence TPVQGGPKVGRNDPCPCGSGKKYKHCHGKLS. Positions 893, 895, 904, and 905 each coordinate Zn(2+). Residues 899 to 909 are compositionally biased toward basic residues; it reads KKYKHCHGKLS.

It belongs to the SecA family. In terms of assembly, monomer and homodimer. Part of the essential Sec protein translocation apparatus which comprises SecA, SecYEG and auxiliary proteins SecDF-YajC and YidC. Zn(2+) serves as cofactor.

Its subcellular location is the cell inner membrane. The protein resides in the cytoplasm. It carries out the reaction ATP + H2O + cellular proteinSide 1 = ADP + phosphate + cellular proteinSide 2.. Its function is as follows. Part of the Sec protein translocase complex. Interacts with the SecYEG preprotein conducting channel. Has a central role in coupling the hydrolysis of ATP to the transfer of proteins into and across the cell membrane, serving both as a receptor for the preprotein-SecB complex and as an ATP-driven molecular motor driving the stepwise translocation of polypeptide chains across the membrane. This Azoarcus sp. (strain BH72) protein is Protein translocase subunit SecA.